A 437-amino-acid chain; its full sequence is O-methyltransferase 3 (437 aa).

The disordered stretch occupies residues 1-21 (MNNKTSNGDITNDEPTVGSKR). Positions 146-180 (SDNLYQDKDDLEKQEKEREKKMANLLSKNVDIKEL) form a coiled coil. The segment at 408 to 437 (DPINNNNNNNNNNNNNNNNTTTTTSTTTTN) is disordered. Residues 411–437 (NNNNNNNNNNNNNNNNTTTTTSTTTTN) show a composition bias toward low complexity.

Belongs to the methyltransferase superfamily. METL family.

Its function is as follows. Probable methyltransferase. The sequence is that of O-methyltransferase 3 (omt3) from Dictyostelium discoideum (Social amoeba).